The primary structure comprises 130 residues: Small ribosomal subunit protein uS9 (130 aa).

The protein belongs to the universal ribosomal protein uS9 family.

This is Small ribosomal subunit protein uS9 (rpsI) from Geobacillus stearothermophilus (Bacillus stearothermophilus).